We begin with the raw amino-acid sequence, 471 residues long: Cysteine--tRNA ligase (471 aa).

Position 30 (Cys30) interacts with Zn(2+). Positions 32–42 (PTVYNFAHIGN) match the 'HIGH' region motif. Residues Cys212, His237, and Glu241 each contribute to the Zn(2+) site. The 'KMSKS' region motif lies at 270-274 (KMSKS). Lys273 is a binding site for ATP.

It belongs to the class-I aminoacyl-tRNA synthetase family. Monomer. Zn(2+) serves as cofactor.

The protein resides in the cytoplasm. The enzyme catalyses tRNA(Cys) + L-cysteine + ATP = L-cysteinyl-tRNA(Cys) + AMP + diphosphate. In Leptospira interrogans serogroup Icterohaemorrhagiae serovar copenhageni (strain Fiocruz L1-130), this protein is Cysteine--tRNA ligase.